A 246-amino-acid polypeptide reads, in one-letter code: Putative KilA-N domain-containing protein L33 (246 aa).

Residues 20-129 (RYTKCQYCDI…AKVSLWIEEW (110 aa)) enclose the KilA-N domain.

The polypeptide is Putative KilA-N domain-containing protein L33 (Acanthamoeba polyphaga mimivirus (APMV)).